We begin with the raw amino-acid sequence, 396 residues long: 1-deoxy-D-xylulose 5-phosphate reductoisomerase (396 aa).

Residues threonine 17, glycine 18, serine 19, isoleucine 20, asparagine 47, and asparagine 130 each contribute to the NADPH site. Lysine 131 contributes to the 1-deoxy-D-xylulose 5-phosphate binding site. Residue glutamate 132 coordinates NADPH. Residue aspartate 156 participates in Mn(2+) binding. Residues serine 157, glutamate 158, serine 182, and histidine 205 each contribute to the 1-deoxy-D-xylulose 5-phosphate site. Glutamate 158 lines the Mn(2+) pocket. Glycine 211 is an NADPH binding site. Positions 218, 223, 224, and 227 each coordinate 1-deoxy-D-xylulose 5-phosphate. Position 227 (glutamate 227) interacts with Mn(2+).

It belongs to the DXR family. Requires Mg(2+) as cofactor. It depends on Mn(2+) as a cofactor.

It catalyses the reaction 2-C-methyl-D-erythritol 4-phosphate + NADP(+) = 1-deoxy-D-xylulose 5-phosphate + NADPH + H(+). The protein operates within isoprenoid biosynthesis; isopentenyl diphosphate biosynthesis via DXP pathway; isopentenyl diphosphate from 1-deoxy-D-xylulose 5-phosphate: step 1/6. Its function is as follows. Catalyzes the NADPH-dependent rearrangement and reduction of 1-deoxy-D-xylulose-5-phosphate (DXP) to 2-C-methyl-D-erythritol 4-phosphate (MEP). This chain is 1-deoxy-D-xylulose 5-phosphate reductoisomerase, found in Rhizobium etli (strain ATCC 51251 / DSM 11541 / JCM 21823 / NBRC 15573 / CFN 42).